We begin with the raw amino-acid sequence, 358 residues long: Hydroxyproline O-arabinosyltransferase 2 (358 aa).

Residues 7 to 26 form a helical; Signal-anchor membrane-spanning segment; that stretch reads YFFPILMTLSLFLIIRYNYI.

As to expression, ubiquitous.

It is found in the golgi apparatus. The protein localises to the cis-Golgi network membrane. It carries out the reaction trans-4-hydroxy-L-prolyl-[protein] + UDP-beta-L-arabinofuranose = O-(beta-L-arabinofuranosyl)-trans-4-hydroxy-L-prolyl-[protein] + UDP + H(+). Functionally, glycosyltransferase involved in the O-arabinosylation of several proteins including extensins and small signaling peptides. Catalyzes the transfer of the initial L-arabinose to the hydroxyl group of Hyp residues. Contributes redundantly with HPAT1 and HPAT3 to arabinosylation of EXT3. In Arabidopsis thaliana (Mouse-ear cress), this protein is Hydroxyproline O-arabinosyltransferase 2.